The following is a 389-amino-acid chain: MQGNALTVLLSGKKYLLLQGPMGPFFSDVAEWLESLGRNAVNVVFNGGDRFYCRHRQYLAYYQTPKEFPGWLRDLHRQYDFDTILCFGDCRPLHKEAKRWAKAKGIRFLAFEEGYLRPQFITVEEGGVNAYSSLPRDPDFYRKLPDMPTPHVENLKPSTMKRIGHAMWYYLMGWHYRHEFPRYRHHKSFSPWYEARCWVRAYWRKQLYKVTQRKVLPRLMNELDQRYYLAVLQVYNDSQIRNHSSYNDVRDYINEVMYSFSRKAPKESYLVIKHHPMDRGHRLYRPLIKRLSKEYGLGERILYVHDLPMPELLRHAKAVVTINSTAGISALIHNKPLKVMGNALYDIKGLTYQGHLHQFWQADFKPDMKLFKKFRGYLLVKTQVNAVYY.

This is Capsule polysaccharide export protein KpsS (kpsS) from Escherichia coli.